A 404-amino-acid polypeptide reads, in one-letter code: Sulfate adenylyltransferase (404 aa).

The protein belongs to the sulfate adenylyltransferase family.

The enzyme catalyses sulfate + ATP + H(+) = adenosine 5'-phosphosulfate + diphosphate. Its pathway is sulfur metabolism; hydrogen sulfide biosynthesis; sulfite from sulfate: step 1/3. The chain is Sulfate adenylyltransferase from Chlorobaculum tepidum (strain ATCC 49652 / DSM 12025 / NBRC 103806 / TLS) (Chlorobium tepidum).